A 349-amino-acid chain; its full sequence is C-X-C chemokine receptor type 1 (349 aa).

Topologically, residues methionine 1 to arginine 44 are extracellular. The N-linked (GlcNAc...) asparagine glycan is linked to asparagine 22. Residues glutamine 45–tyrosine 71 form a helical membrane-spanning segment. Over arginine 72–aspartate 80 the chain is Cytoplasmic. The chain crosses the membrane as a helical span at residues valine 81–alanine 101. Residues valine 102–lysine 116 are Extracellular-facing. Cysteine 115 and cysteine 192 are disulfide-bonded. The chain crosses the membrane as a helical span at residues methionine 117–valine 138. At aspartate 139 to lysine 159 the chain is on the cytoplasmic side. A helical transmembrane segment spans residues phenylalanine 160–phenylalanine 179. The Extracellular segment spans residues arginine 180 to arginine 204. The helical transmembrane segment at isoleucine 205–valine 225 threads the bilayer. Topologically, residues cysteine 226 to tryptophan 247 are cytoplasmic. Residues valine 248–serine 269 traverse the membrane as a helical segment. Topologically, residues aspartate 270–glutamine 290 are extracellular. A helical membrane pass occupies residues alanine 291 to valine 313. The Cytoplasmic segment spans residues glycine 314–tyrosine 349.

Belongs to the G-protein coupled receptor 1 family. As to quaternary structure, interacts with IL8. Interacts with GNAI2.

It localises to the cell membrane. In terms of biological role, receptor to interleukin-8, which is a powerful neutrophils chemotactic factor. Binding of IL-8 to the receptor causes activation of neutrophils. This response is mediated via a G-protein that activates a phosphatidylinositol-calcium second messenger system. The protein is C-X-C chemokine receptor type 1 (Cxcr1) of Rattus norvegicus (Rat).